We begin with the raw amino-acid sequence, 125 residues long: Ribonuclease VapC19 (125 aa).

Residues 3-122 (LIDTTIAVDH…RHFPMFPDLQ (120 aa)) form the PINc domain. Mg(2+) is bound by residues Asp5 and Asp93.

It belongs to the PINc/VapC protein family. It depends on Mg(2+) as a cofactor.

In terms of biological role, toxic component of a type II toxin-antitoxin (TA) system. An RNase. Its toxic effect is neutralized by coexpression with cognate antitoxin VapB19. The chain is Ribonuclease VapC19 from Mycobacterium tuberculosis (strain CDC 1551 / Oshkosh).